Consider the following 592-residue polypeptide: Aspartate--tRNA ligase (592 aa).

Glutamate 171 lines the L-aspartate pocket. Residues 195–198 (QLFK) form an aspartate region. Arginine 217 is a binding site for L-aspartate. Residues 217-219 (RDE) and glutamine 226 contribute to the ATP site. L-aspartate is bound at residue histidine 448. Residue glutamate 482 coordinates ATP. Arginine 489 contacts L-aspartate. An ATP-binding site is contributed by 534–537 (GLDR).

The protein belongs to the class-II aminoacyl-tRNA synthetase family. Type 1 subfamily. In terms of assembly, homodimer.

It is found in the cytoplasm. It carries out the reaction tRNA(Asp) + L-aspartate + ATP = L-aspartyl-tRNA(Asp) + AMP + diphosphate. Its function is as follows. Catalyzes the attachment of L-aspartate to tRNA(Asp) in a two-step reaction: L-aspartate is first activated by ATP to form Asp-AMP and then transferred to the acceptor end of tRNA(Asp). This chain is Aspartate--tRNA ligase, found in Vibrio campbellii (strain ATCC BAA-1116).